Here is a 91-residue protein sequence, read N- to C-terminus: Gem-associated protein 7 homolog (91 aa).

Residues 18 to 86 (LKFYQKMASA…VVGIEYNLVQ (69 aa)) form the Sm domain.

It belongs to the gemin-7 family. As to quaternary structure, part of the core SMN complex at least composed of smn1, yip11/gem2, gem6, gem7 and gem8. Interacts with gem6; the interaction is direct. Interacts with gem8; the interaction is direct.

This chain is Gem-associated protein 7 homolog, found in Schizosaccharomyces pombe (strain 972 / ATCC 24843) (Fission yeast).